A 577-amino-acid chain; its full sequence is 2-succinyl-5-enolpyruvyl-6-hydroxy-3-cyclohexene-1-carboxylate synthase (577 aa).

It belongs to the TPP enzyme family. MenD subfamily. In terms of assembly, homodimer. Mg(2+) is required as a cofactor. Mn(2+) serves as cofactor. Requires thiamine diphosphate as cofactor.

The catalysed reaction is isochorismate + 2-oxoglutarate + H(+) = 5-enolpyruvoyl-6-hydroxy-2-succinyl-cyclohex-3-ene-1-carboxylate + CO2. It participates in quinol/quinone metabolism; 1,4-dihydroxy-2-naphthoate biosynthesis; 1,4-dihydroxy-2-naphthoate from chorismate: step 2/7. It functions in the pathway quinol/quinone metabolism; menaquinone biosynthesis. Its function is as follows. Catalyzes the thiamine diphosphate-dependent decarboxylation of 2-oxoglutarate and the subsequent addition of the resulting succinic semialdehyde-thiamine pyrophosphate anion to isochorismate to yield 2-succinyl-5-enolpyruvyl-6-hydroxy-3-cyclohexene-1-carboxylate (SEPHCHC). This chain is 2-succinyl-5-enolpyruvyl-6-hydroxy-3-cyclohexene-1-carboxylate synthase, found in Geobacillus kaustophilus (strain HTA426).